A 324-amino-acid polypeptide reads, in one-letter code: Mevalonate kinase (324 aa).

103–113 (PPRAGLGSSAA) lines the ATP pocket. The active-site Proton acceptor is Asp154.

This sequence belongs to the GHMP kinase family. Mevalonate kinase subfamily. As to quaternary structure, homodimer. It depends on Mg(2+) as a cofactor.

The protein resides in the cytoplasm. The enzyme catalyses (R)-mevalonate + ATP = (R)-5-phosphomevalonate + ADP + H(+). The protein operates within isoprenoid biosynthesis; isopentenyl diphosphate biosynthesis via mevalonate pathway; isopentenyl diphosphate from (R)-mevalonate: step 1/3. Functionally, catalyzes the phosphorylation of (R)-mevalonate (MVA) to (R)-mevalonate 5-phosphate (MVAP). Functions in the mevalonate (MVA) pathway leading to isopentenyl diphosphate (IPP), a key precursor for the biosynthesis of isoprenoid compounds such as archaeal membrane lipids. In Aeropyrum pernix (strain ATCC 700893 / DSM 11879 / JCM 9820 / NBRC 100138 / K1), this protein is Mevalonate kinase.